The chain runs to 287 residues: 4,4'-diapophytoene synthase (287 aa).

(2E,6E)-farnesyl diphosphate contacts are provided by residues 18–21 (HSKS), Tyr41, and Arg45. Mg(2+)-binding residues include Asp48 and Asp52. Gln165 contacts (2E,6E)-farnesyl diphosphate. Residue Asn168 participates in Mg(2+) binding. Arg171 is a binding site for (2E,6E)-farnesyl diphosphate. A Mg(2+)-binding site is contributed by Asp172. Tyr248 serves as a coordination point for (2E,6E)-farnesyl diphosphate.

This sequence belongs to the phytoene/squalene synthase family. CrtM subfamily. It depends on Mg(2+) as a cofactor.

The catalysed reaction is 2 (2E,6E)-farnesyl diphosphate = 15-cis-4,4'-diapophytoene + 2 diphosphate. It participates in carotenoid biosynthesis; staphyloxanthin biosynthesis; staphyloxanthin from farnesyl diphosphate: step 1/5. Functionally, involved in the biosynthesis of the yellow-orange carotenoid staphyloxanthin, which plays a role in the virulence via its protective function against oxidative stress. Catalyzes the head-to-head condensation of two molecules of farnesyl diphosphate (FPP) into the colorless C(30) carotenoid 4,4'-diapophytoene (dehydrosqualene). The sequence is that of 4,4'-diapophytoene synthase from Staphylococcus aureus.